We begin with the raw amino-acid sequence, 216 residues long: Uracil-DNA glycosylase (216 aa).

Asp59 acts as the Proton acceptor in catalysis.

The protein belongs to the uracil-DNA glycosylase (UDG) superfamily. UNG family.

Its subcellular location is the cytoplasm. It catalyses the reaction Hydrolyzes single-stranded DNA or mismatched double-stranded DNA and polynucleotides, releasing free uracil.. Excises uracil residues from the DNA which can arise as a result of misincorporation of dUMP residues by DNA polymerase or due to deamination of cytosine. This Staphylococcus epidermidis (strain ATCC 35984 / DSM 28319 / BCRC 17069 / CCUG 31568 / BM 3577 / RP62A) protein is Uracil-DNA glycosylase.